Consider the following 178-residue polypeptide: ATP synthase subunit delta (178 aa).

The protein belongs to the ATPase delta chain family. F-type ATPases have 2 components, F(1) - the catalytic core - and F(0) - the membrane proton channel. F(1) has five subunits: alpha(3), beta(3), gamma(1), delta(1), epsilon(1). F(0) has three main subunits: a(1), b(2) and c(10-14). The alpha and beta chains form an alternating ring which encloses part of the gamma chain. F(1) is attached to F(0) by a central stalk formed by the gamma and epsilon chains, while a peripheral stalk is formed by the delta and b chains.

It is found in the cell inner membrane. Functionally, f(1)F(0) ATP synthase produces ATP from ADP in the presence of a proton or sodium gradient. F-type ATPases consist of two structural domains, F(1) containing the extramembraneous catalytic core and F(0) containing the membrane proton channel, linked together by a central stalk and a peripheral stalk. During catalysis, ATP synthesis in the catalytic domain of F(1) is coupled via a rotary mechanism of the central stalk subunits to proton translocation. Its function is as follows. This protein is part of the stalk that links CF(0) to CF(1). It either transmits conformational changes from CF(0) to CF(1) or is implicated in proton conduction. The polypeptide is ATP synthase subunit delta (Pelodictyon phaeoclathratiforme (strain DSM 5477 / BU-1)).